Consider the following 214-residue polypeptide: Octanoyltransferase (214 aa).

Residues 34-214 (GLQKELVWLL…KFNEIFSSFN (181 aa)) enclose the BPL/LPL catalytic domain. Substrate is bound by residues 73–80 (RGGKYTYH), 145–147 (AFG), and 158–160 (GVS). Cys-176 acts as the Acyl-thioester intermediate in catalysis.

It belongs to the LipB family.

It localises to the cytoplasm. It catalyses the reaction octanoyl-[ACP] + L-lysyl-[protein] = N(6)-octanoyl-L-lysyl-[protein] + holo-[ACP] + H(+). Its pathway is protein modification; protein lipoylation via endogenous pathway; protein N(6)-(lipoyl)lysine from octanoyl-[acyl-carrier-protein]: step 1/2. Catalyzes the transfer of endogenously produced octanoic acid from octanoyl-acyl-carrier-protein onto the lipoyl domains of lipoate-dependent enzymes. Lipoyl-ACP can also act as a substrate although octanoyl-ACP is likely to be the physiological substrate. The chain is Octanoyltransferase from Ehrlichia canis (strain Jake).